A 114-amino-acid chain; its full sequence is rRNA-processing protein cgrA (114 aa).

Low complexity predominate over residues 1-13 (MSSAAPAPSTHAA). Disordered stretches follow at residues 1-47 (MSSA…AARK) and 77-114 (RRAAKEEKERYEKMAEKMHRKRVERLKKREKRNKLLNS). Positions 40–101 (TKRAAARKEQ…EKMHRKRVER (62 aa)) form a coiled coil. A compositionally biased stretch (basic and acidic residues) spans 77–93 (RRAAKEEKERYEKMAEK). The span at 94-114 (MHRKRVERLKKREKRNKLLNS) shows a compositional bias: basic residues.

This sequence belongs to the CGR1 family.

The protein localises to the nucleus. The protein resides in the nucleolus. Its function is as follows. Involved in nucleolar integrity and required for processing of the pre-rRNA for the 60S ribosome subunit. The polypeptide is rRNA-processing protein cgrA (cgrA) (Emericella nidulans (strain FGSC A4 / ATCC 38163 / CBS 112.46 / NRRL 194 / M139) (Aspergillus nidulans)).